Here is a 507-residue protein sequence, read N- to C-terminus: Anthranilate synthase component 1 (507 aa).

Residue serine 65 coordinates L-tryptophan. Serine 81 is subject to Phosphoserine. Residue threonine 223 is modified to Phosphothreonine. 280–282 (PYL) contacts L-tryptophan. Residue 316-317 (GT) coordinates chorismate. Mg(2+) is bound at residue glutamate 343. Residues tyrosine 431, arginine 452, 466-468 (GGG), and glycine 468 each bind chorismate. Glutamate 481 is a binding site for Mg(2+).

The protein belongs to the anthranilate synthase component I family. Tetramer of two components I and two components II. The cofactor is Mg(2+).

The catalysed reaction is chorismate + L-glutamine = anthranilate + pyruvate + L-glutamate + H(+). It functions in the pathway amino-acid biosynthesis; L-tryptophan biosynthesis; L-tryptophan from chorismate: step 1/5. The sequence is that of Anthranilate synthase component 1 (TRP2) from Saccharomyces cerevisiae (strain ATCC 204508 / S288c) (Baker's yeast).